The sequence spans 67 residues: Large ribosomal subunit protein bL35 (67 aa).

The span at 1–11 (MPKLKTRKAAA) shows a compositional bias: basic residues. Positions 1–22 (MPKLKTRKAAAKRFEATGSGKK) are disordered.

The protein belongs to the bacterial ribosomal protein bL35 family.

This is Large ribosomal subunit protein bL35 from Microcystis aeruginosa (strain NIES-843 / IAM M-2473).